The chain runs to 330 residues: Aspartate--ammonia ligase (330 aa).

This sequence belongs to the class-II aminoacyl-tRNA synthetase family. AsnA subfamily.

Its subcellular location is the cytoplasm. The enzyme catalyses L-aspartate + NH4(+) + ATP = L-asparagine + AMP + diphosphate + H(+). It participates in amino-acid biosynthesis; L-asparagine biosynthesis; L-asparagine from L-aspartate (ammonia route): step 1/1. This Treponema pallidum (strain Nichols) protein is Aspartate--ammonia ligase.